The following is a 383-amino-acid chain: GTP-binding protein 10 homolog (383 aa).

The 136-residue stretch at 22 to 157 folds into the Obg domain; the sequence is PSFLDTLRLA…RIVNLDLKLI (136 aa). The OBG-type G domain occupies 158–353; the sequence is ADVGLVGFPN…VKSQLRRTLV (196 aa). Residues 164 to 171, 211 to 215, and 287 to 290 each bind GTP; these read GFPNAGKS, DLPGL, and NKMD.

It belongs to the TRAFAC class OBG-HflX-like GTPase superfamily. OBG GTPase family.

It is found in the nucleus. The protein localises to the nucleolus. Functionally, may be involved in the ribosome maturation process. This is GTP-binding protein 10 homolog from Drosophila pseudoobscura pseudoobscura (Fruit fly).